The chain runs to 142 residues: UPF0275 protein PM0505 (142 aa).

It belongs to the UPF0275 family.

This Pasteurella multocida (strain Pm70) protein is UPF0275 protein PM0505.